Reading from the N-terminus, the 67-residue chain is Pepsin B (67 aa).

A propeptide spans 1–43 (MERIILRKGKSIREAMEEQGVLEKFLKNRPKIDPAAKYHFNND) (activation peptide).

This sequence belongs to the peptidase A1 family.

The protein localises to the secreted. It catalyses the reaction Degradation of gelatin, little activity on hemoglobin. Specificity on B chain of insulin more restricted than that of pepsin A. Does not cleave 1-Phe-|-Val-2, 4-Gln-|-His-5 or 23-Gly-|-Phe-24.. In Sus scrofa (Pig), this protein is Pepsin B (PGB).